Consider the following 408-residue polypeptide: Phosphatidylinositol transfer protein CSR1 (408 aa).

Residue serine 2 is modified to N-acetylserine. Position 2 is a phosphoserine (serine 2). One can recognise a CRAL-TRIO domain in the interval 157–317 (ETGVIKNLEL…YLGGENDNDL (161 aa)).

The protein belongs to the PITP family. As to quaternary structure, forms a complex with 2 TSA2 subunits. Binds phosphatidylinositol (PtdIns).

It is found in the cytoplasm. The protein resides in the microsome. Its subcellular location is the endosome. It carries out the reaction a 1,2-diacyl-sn-glycero-3-phospho-(1D-myo-inositol)(in) = a 1,2-diacyl-sn-glycero-3-phospho-(1D-myo-inositol)(out). Non-classical phosphatidylinositol (PtdIns) transfer protein (PITP), which exhibits PtdIns-binding/transfer activity in the absence of detectable PtdCho-binding/transfer activity. Activates SPO14/PLD1 (phospholipase D1) by stimulating phosphoinositide synthesis via the STT4 PtdIns 4-kinase. Modulates ArfGAP function through effects on SPO14 activity. Inhibits phosphatidylcholine degradation by PLB1 (phospholipase B1). May also regulate post-Golgi membrane-trafficking events and have a role resistance to oxidative stress. Inhibits fatty acid synthase activity in response to heme depletion and oleic acid starvation, preventing saturated fatty acid (SFA) accumulation. The polypeptide is Phosphatidylinositol transfer protein CSR1 (CSR1) (Saccharomyces cerevisiae (strain ATCC 204508 / S288c) (Baker's yeast)).